A 61-amino-acid polypeptide reads, in one-letter code: Metallothionein-1M (61 aa).

Residues Met1 to Cys29 are beta. A divalent metal cation contacts are provided by Cys5, Cys7, Cys13, Cys15, Cys19, Cys21, Cys24, Cys26, Cys29, Cys33, Cys34, Cys36, Cys37, Cys41, Cys44, Cys48, Cys50, Cys57, Cys59, and Cys60. Positions Lys30–Ala61 are alpha.

It belongs to the metallothionein superfamily. Type 1 family. Monomer.

In terms of biological role, metallothioneins have a high content of cysteine residues that bind various heavy metals; these proteins are transcriptionally regulated by both heavy metals and glucocorticoids. In Homo sapiens (Human), this protein is Metallothionein-1M (MT1M).